Reading from the N-terminus, the 357-residue chain is Cobalt-precorrin-5B C(1)-methyltransferase (357 aa).

Belongs to the CbiD family.

The enzyme catalyses Co-precorrin-5B + S-adenosyl-L-methionine = Co-precorrin-6A + S-adenosyl-L-homocysteine. It functions in the pathway cofactor biosynthesis; adenosylcobalamin biosynthesis; cob(II)yrinate a,c-diamide from sirohydrochlorin (anaerobic route): step 6/10. In terms of biological role, catalyzes the methylation of C-1 in cobalt-precorrin-5B to form cobalt-precorrin-6A. This chain is Cobalt-precorrin-5B C(1)-methyltransferase, found in Gloeobacter violaceus (strain ATCC 29082 / PCC 7421).